We begin with the raw amino-acid sequence, 183 residues long: Probable chemoreceptor glutamine deamidase CheD (183 aa).

It belongs to the CheD family.

The catalysed reaction is L-glutaminyl-[protein] + H2O = L-glutamyl-[protein] + NH4(+). Its function is as follows. Probably deamidates glutamine residues to glutamate on methyl-accepting chemotaxis receptors (MCPs), playing an important role in chemotaxis. The chain is Probable chemoreceptor glutamine deamidase CheD from Sinorhizobium medicae (strain WSM419) (Ensifer medicae).